Here is a 42-residue protein sequence, read N- to C-terminus: Cytochrome b6-f complex subunit 7 (42 aa).

Residues 19–37 (AVVCFSMTLFGLSLGFGLL) traverse the membrane as a helical segment.

It belongs to the PetM family. The 4 large subunits of the cytochrome b6-f complex are cytochrome b6, subunit IV (17 kDa polypeptide, PetD), cytochrome f and the Rieske protein, while the 4 small subunits are PetG, PetL, PetM and PetN. The complex functions as a dimer.

Its subcellular location is the plastid. The protein resides in the chloroplast thylakoid membrane. In terms of biological role, component of the cytochrome b6-f complex, which mediates electron transfer between photosystem II (PSII) and photosystem I (PSI), cyclic electron flow around PSI, and state transitions. In Phaeodactylum tricornutum (strain CCAP 1055/1), this protein is Cytochrome b6-f complex subunit 7.